A 176-amino-acid polypeptide reads, in one-letter code: Zinc finger protein 428 (176 aa).

The segment at 1–152 (MTETREPTET…EEEGGTYHCT (152 aa)) is disordered. A compositionally biased stretch (acidic residues) spans 16 to 46 (LEEDDEDLSPEPDSEEEEEEEEEETTDDPEY). Position 96 is a phosphothreonine (T96). Residues 126–138 (PSRTGETRPAGRD) show a composition bias toward basic and acidic residues. The segment at 149-171 (YHCTECEDSFDNLGELHGHFMLH) adopts a C2H2-type zinc-finger fold.

The chain is Zinc finger protein 428 (Znf428) from Mus musculus (Mouse).